Reading from the N-terminus, the 486-residue chain is Ribulose bisphosphate carboxylase large chain (486 aa).

Residues asparagine 126 and threonine 176 each contribute to the substrate site. Catalysis depends on lysine 178, which acts as the Proton acceptor. Position 180 (lysine 180) interacts with substrate. Mg(2+)-binding residues include lysine 204, aspartate 206, and glutamate 207. The residue at position 204 (lysine 204) is an N6-carboxylysine. Residue histidine 296 is the Proton acceptor of the active site. Arginine 297, histidine 329, and serine 381 together coordinate substrate.

This sequence belongs to the RuBisCO large chain family. Type I subfamily. In terms of assembly, heterohexadecamer of 8 large chains and 8 small chains. Mg(2+) is required as a cofactor.

It carries out the reaction 2 (2R)-3-phosphoglycerate + 2 H(+) = D-ribulose 1,5-bisphosphate + CO2 + H2O. The enzyme catalyses D-ribulose 1,5-bisphosphate + O2 = 2-phosphoglycolate + (2R)-3-phosphoglycerate + 2 H(+). RuBisCO catalyzes two reactions: the carboxylation of D-ribulose 1,5-bisphosphate, the primary event in carbon dioxide fixation, as well as the oxidative fragmentation of the pentose substrate. Both reactions occur simultaneously and in competition at the same active site. The protein is Ribulose bisphosphate carboxylase large chain of Rhizobium meliloti (strain 1021) (Ensifer meliloti).